We begin with the raw amino-acid sequence, 151 residues long: Transcriptional regulator MraZ (151 aa).

SpoVT-AbrB domains lie at 5–52 and 81–124; these read ANAI…PLDE and AVDL…DEDA.

Belongs to the MraZ family. As to quaternary structure, forms oligomers.

The protein localises to the cytoplasm. Its subcellular location is the nucleoid. The sequence is that of Transcriptional regulator MraZ from Pseudomonas fluorescens (strain SBW25).